A 198-amino-acid polypeptide reads, in one-letter code: MASALLRKATVGGSAAAAAARWASRGLASVGSGSDIVSAAPGVSLQKARSWDEGVATNFSTTPLKDIFHGKKVVIFGLPGAYTGVCSQAHVPSYKNNIDKLKAKGVDSVICVSVNDPYALNGWAEKLQAKDAIEFYGDFDGSFHKSLDLEVDLSAALLGRRSHRWSAFVDDGKIKAFNVEVAPSDFKVSGAEVILDQI.

Residues 1–27 constitute a mitochondrion transit peptide; that stretch reads MASALLRKATVGGSAAAAAARWASRGL. Positions 34–198 constitute a Thioredoxin domain; that stretch reads SDIVSAAPGV…SGAEVILDQI (165 aa). C86 functions as the Cysteine sulfenic acid (-SOH) intermediate in the catalytic mechanism.

Belongs to the peroxiredoxin family. Prx5 subfamily. Monomer.

It is found in the mitochondrion matrix. It carries out the reaction [glutaredoxin]-dithiol + a hydroperoxide = [glutaredoxin]-disulfide + an alcohol + H2O. Its function is as follows. Thiol-specific peroxidase that catalyzes the reduction of hydrogen peroxide and organic hydroperoxides to water and alcohols, respectively. Plays a role in cell protection against oxidative stress by detoxifying peroxides. Reduces preferentially hydrogen peroxide rather than alkyl peroxides. May be involved in mitochondrial redox homeostasis. This chain is Peroxiredoxin-2F, mitochondrial (PRXIIF), found in Oryza sativa subsp. japonica (Rice).